The sequence spans 516 residues: Maturase K (516 aa).

This sequence belongs to the intron maturase 2 family. MatK subfamily.

It is found in the plastid. The protein resides in the chloroplast. In terms of biological role, usually encoded in the trnK tRNA gene intron. Probably assists in splicing its own and other chloroplast group II introns. The protein is Maturase K of Chara connivens (Convergent stonewort).